Here is a 226-residue protein sequence, read N- to C-terminus: Ribose-5-phosphate isomerase A (226 aa).

Substrate is bound by residues 28–31, 83–86, and 97–100; these read TGST, DGAD, and KGGG. Glutamate 106 (proton acceptor) is an active-site residue. A substrate-binding site is contributed by lysine 124.

This sequence belongs to the ribose 5-phosphate isomerase family. Homotetramer.

It carries out the reaction aldehydo-D-ribose 5-phosphate = D-ribulose 5-phosphate. The protein operates within carbohydrate biosynthesis; D-ribose 5-phosphate biosynthesis. Catalyzes the reversible conversion of ribose-5-phosphate to ribulose 5-phosphate. The polypeptide is Ribose-5-phosphate isomerase A (Methanocaldococcus jannaschii (strain ATCC 43067 / DSM 2661 / JAL-1 / JCM 10045 / NBRC 100440) (Methanococcus jannaschii)).